Here is a 477-residue protein sequence, read N- to C-terminus: Pentatricopeptide repeat-containing protein At5g47360 (477 aa).

9 PPR repeats span residues 129 to 163, 164 to 198, 199 to 233, 234 to 264, 273 to 307, 308 to 343, 344 to 378, 379 to 413, and 416 to 450; these read NVKT…NVCA, DTVA…GLYP, DVIT…DCVL, NSVT…MEKE, NAVT…GCMP, NRVT…GGVS, LSEC…GVRP, DGLA…DVKS, and DSDI…KMRL.

It belongs to the PPR family. P subfamily.

This is Pentatricopeptide repeat-containing protein At5g47360 from Arabidopsis thaliana (Mouse-ear cress).